Consider the following 172-residue polypeptide: Shikimate kinase (172 aa).

Residue 11-16 coordinates ATP; sequence GCGKST. Position 15 (Ser15) interacts with Mg(2+). Substrate contacts are provided by Asp33, Arg57, and Gly80. Arg120 provides a ligand contact to ATP. Arg142 serves as a coordination point for substrate. Arg158 lines the ATP pocket.

Belongs to the shikimate kinase family. As to quaternary structure, monomer. Requires Mg(2+) as cofactor.

It is found in the cytoplasm. It catalyses the reaction shikimate + ATP = 3-phosphoshikimate + ADP + H(+). It participates in metabolic intermediate biosynthesis; chorismate biosynthesis; chorismate from D-erythrose 4-phosphate and phosphoenolpyruvate: step 5/7. Catalyzes the specific phosphorylation of the 3-hydroxyl group of shikimic acid using ATP as a cosubstrate. The protein is Shikimate kinase of Flavobacterium johnsoniae (strain ATCC 17061 / DSM 2064 / JCM 8514 / BCRC 14874 / CCUG 350202 / NBRC 14942 / NCIMB 11054 / UW101) (Cytophaga johnsonae).